Consider the following 305-residue polypeptide: Glycine--tRNA ligase alpha subunit (305 aa).

It belongs to the class-II aminoacyl-tRNA synthetase family. Tetramer of two alpha and two beta subunits.

The protein resides in the cytoplasm. The enzyme catalyses tRNA(Gly) + glycine + ATP = glycyl-tRNA(Gly) + AMP + diphosphate. The chain is Glycine--tRNA ligase alpha subunit from Streptococcus mutans serotype c (strain ATCC 700610 / UA159).